A 311-amino-acid chain; its full sequence is Malate dehydrogenase (311 aa).

Residues 7 to 13 (GAAGGIG) and Asp34 each bind NAD(+). The substrate site is built by Arg81 and Arg87. NAD(+)-binding positions include Asn94 and 117-119 (ITN). Positions 119 and 153 each coordinate substrate. His177 serves as the catalytic Proton acceptor. Met227 contacts NAD(+).

This sequence belongs to the LDH/MDH superfamily. MDH type 1 family. Homodimer.

It catalyses the reaction (S)-malate + NAD(+) = oxaloacetate + NADH + H(+). Catalyzes the reversible oxidation of malate to oxaloacetate. This is Malate dehydrogenase from Aeromonas salmonicida (strain A449).